Reading from the N-terminus, the 420-residue chain is LanC-like protein 3 (420 aa).

Belongs to the LanC-like protein family.

In Homo sapiens (Human), this protein is LanC-like protein 3 (LANCL3).